A 128-amino-acid polypeptide reads, in one-letter code: uncharacterized protein (128 aa).

2 helical membrane passes run 33–53 (LLYISIIFLFLNYVVDIVCYV) and 61–81 (FFCWVFLNLGVIGIIITVIIY). Residues 99–120 (DSLNQNVGESQSNEPPKYTSTF) are compositionally biased toward polar residues. The disordered stretch occupies residues 99–128 (DSLNQNVGESQSNEPPKYTSTFMDELDKQD).

Its subcellular location is the membrane. This is an uncharacterized protein from Schizosaccharomyces pombe (strain 972 / ATCC 24843) (Fission yeast).